A 284-amino-acid chain; its full sequence is 2-dehydro-3-deoxyphosphooctonate aldolase (284 aa).

Belongs to the KdsA family.

It localises to the cytoplasm. It carries out the reaction D-arabinose 5-phosphate + phosphoenolpyruvate + H2O = 3-deoxy-alpha-D-manno-2-octulosonate-8-phosphate + phosphate. It functions in the pathway carbohydrate biosynthesis; 3-deoxy-D-manno-octulosonate biosynthesis; 3-deoxy-D-manno-octulosonate from D-ribulose 5-phosphate: step 2/3. It participates in bacterial outer membrane biogenesis; lipopolysaccharide biosynthesis. The chain is 2-dehydro-3-deoxyphosphooctonate aldolase from Burkholderia cenocepacia (strain HI2424).